We begin with the raw amino-acid sequence, 503 residues long: Probable cytosol aminopeptidase (503 aa).

Lysine 270 and aspartate 275 together coordinate Mn(2+). The active site involves lysine 282. Residues aspartate 293, aspartate 352, and glutamate 354 each coordinate Mn(2+). Arginine 356 is a catalytic residue.

The protein belongs to the peptidase M17 family. Requires Mn(2+) as cofactor.

It is found in the cytoplasm. It carries out the reaction Release of an N-terminal amino acid, Xaa-|-Yaa-, in which Xaa is preferably Leu, but may be other amino acids including Pro although not Arg or Lys, and Yaa may be Pro. Amino acid amides and methyl esters are also readily hydrolyzed, but rates on arylamides are exceedingly low.. The enzyme catalyses Release of an N-terminal amino acid, preferentially leucine, but not glutamic or aspartic acids.. Presumably involved in the processing and regular turnover of intracellular proteins. Catalyzes the removal of unsubstituted N-terminal amino acids from various peptides. This is Probable cytosol aminopeptidase from Enterobacter sp. (strain 638).